Here is a 243-residue protein sequence, read N- to C-terminus: Peptidyl-tRNA hydrolase (243 aa).

Tyr14 contributes to the tRNA binding site. His19 serves as the catalytic Proton acceptor. TRNA-binding residues include Phe64, Asn66, and Asn112. A compositionally biased stretch (basic and acidic residues) spans 190 to 205 (KAEEEKPAKEMKDAGK). The segment at 190-243 (KAEEEKPAKEMKDAGKKPASQSHIHQARNHNQPKLPATGPMADMLKKMFGKKGD) is disordered. Over residues 208–221 (ASQSHIHQARNHNQ) the composition is skewed to polar residues.

This sequence belongs to the PTH family. Monomer.

The protein resides in the cytoplasm. It catalyses the reaction an N-acyl-L-alpha-aminoacyl-tRNA + H2O = an N-acyl-L-amino acid + a tRNA + H(+). In terms of biological role, hydrolyzes ribosome-free peptidyl-tRNAs (with 1 or more amino acids incorporated), which drop off the ribosome during protein synthesis, or as a result of ribosome stalling. Its function is as follows. Catalyzes the release of premature peptidyl moieties from peptidyl-tRNA molecules trapped in stalled 50S ribosomal subunits, and thus maintains levels of free tRNAs and 50S ribosomes. The sequence is that of Peptidyl-tRNA hydrolase from Rhizobium johnstonii (strain DSM 114642 / LMG 32736 / 3841) (Rhizobium leguminosarum bv. viciae).